Reading from the N-terminus, the 78-residue chain is Translational regulator CsrA (78 aa).

Belongs to the CsrA/RsmA family. As to quaternary structure, homodimer; the beta-strands of each monomer intercalate to form a hydrophobic core, while the alpha-helices form wings that extend away from the core.

The protein localises to the cytoplasm. Its function is as follows. A translational regulator that binds mRNA to regulate translation initiation and/or mRNA stability. Usually binds in the 5'-UTR at or near the Shine-Dalgarno sequence preventing ribosome-binding, thus repressing translation. Its main target seems to be the major flagellin gene, while its function is anatagonized by FliW. In Geobacter metallireducens (strain ATCC 53774 / DSM 7210 / GS-15), this protein is Translational regulator CsrA.